The chain runs to 352 residues: Histidinol-phosphate aminotransferase (352 aa).

At lysine 208 the chain carries N6-(pyridoxal phosphate)lysine.

The protein belongs to the class-II pyridoxal-phosphate-dependent aminotransferase family. Histidinol-phosphate aminotransferase subfamily. Homodimer. Requires pyridoxal 5'-phosphate as cofactor.

It catalyses the reaction L-histidinol phosphate + 2-oxoglutarate = 3-(imidazol-4-yl)-2-oxopropyl phosphate + L-glutamate. It functions in the pathway amino-acid biosynthesis; L-histidine biosynthesis; L-histidine from 5-phospho-alpha-D-ribose 1-diphosphate: step 7/9. In Streptococcus sanguinis (strain SK36), this protein is Histidinol-phosphate aminotransferase.